We begin with the raw amino-acid sequence, 329 residues long: MVKTQRVVITPGEPAGIGPDLVVQLAQREWPVELVVCADATLLTDRAAMLGLPLTLRPYSPNSPAQPQTTGTLTLLPVALRESVTAGQLAIENGHYVVETLARACDGCLNGEFAALITGPVHKGVINDAGIPFTGHTEFFEERSQAKKVVMMLATEELRVALATTHLPLRDIADAITPALLHEVIAILHHDLRTKFGIAEPRILVCGLNPHAGEGGHMGTEEIDTIIPVLDELRAQGMKLNGPLPADTLFQPKYLDNADAVLAMYHDQGLPVLKYQGFGRGVNITLGLPFIRTSVDHGTALELAGRGEADVGSFITALNLAIKMIVNTQ.

The substrate site is built by H136 and T137. H166, H211, and H266 together coordinate a divalent metal cation. Substrate is bound by residues K274, N283, and R292.

The protein belongs to the PdxA family. In terms of assembly, homodimer. The cofactor is Zn(2+). It depends on Mg(2+) as a cofactor. Co(2+) serves as cofactor.

Its subcellular location is the cytoplasm. It carries out the reaction 4-(phosphooxy)-L-threonine + NAD(+) = 3-amino-2-oxopropyl phosphate + CO2 + NADH. The protein operates within cofactor biosynthesis; pyridoxine 5'-phosphate biosynthesis; pyridoxine 5'-phosphate from D-erythrose 4-phosphate: step 4/5. Functionally, catalyzes the NAD(P)-dependent oxidation of 4-(phosphooxy)-L-threonine (HTP) into 2-amino-3-oxo-4-(phosphooxy)butyric acid which spontaneously decarboxylates to form 3-amino-2-oxopropyl phosphate (AHAP). The chain is 4-hydroxythreonine-4-phosphate dehydrogenase from Escherichia coli O139:H28 (strain E24377A / ETEC).